The chain runs to 81 residues: Large ribosomal subunit protein bL31B (81 aa).

Belongs to the bacterial ribosomal protein bL31 family. Type B subfamily. Part of the 50S ribosomal subunit.

The polypeptide is Large ribosomal subunit protein bL31B (Limosilactobacillus reuteri (strain DSM 20016) (Lactobacillus reuteri)).